Consider the following 299-residue polypeptide: HTH-type transcriptional regulator CrgA (299 aa).

The HTH lysR-type domain occupies Met1–Thr60. Positions Phe20–Lys39 form a DNA-binding region, H-T-H motif.

The protein belongs to the LysR transcriptional regulatory family. Forms oligomers. Oligomerization is required for DNA binding.

Its function is as follows. Involved in the regulation of bacterial adhesion to host epithelial cells. May play a central regulatory role in meningococcal adhesion, particularly in switching from initial adhesion to intimate adhesion by downregulating the bacterial surface structures that hinder this adhesion. During intimate adhesion, negatively regulates the expression of pilC1, encoding a pilus-associated protein, pilE, encoding the pilin, and sia genes, encoding the capsule. Also negatively regulates its own expression. May also regulate other genes that are involved in intimate adhesion. Binds specifically to the promoter region of pilC1 and crgA (both harboring a CREN element), and pilE and sia (both devoid of a CREN element). Acts through interaction with RNA polymerase (RNAP). Interaction with RNAP leads to the production of short abortive transcripts, suggesting that CrgA may act by preventing RNAP from clearing the promoter. In Neisseria meningitidis serogroup C (strain 8013), this protein is HTH-type transcriptional regulator CrgA.